The primary structure comprises 259 residues: Cobalt transport protein CbiM (259 aa).

Residues 1–25 (MFRRTTWLTLYLLLAMAALARPAFA) form the signal peptide. The next 6 membrane-spanning stretches (helical) occupy residues 31–51 (GFLP…FWIW), 68–88 (MLLG…LPSV), 100–120 (LGAV…VLLF), 132–152 (TLGA…YGLY), 160–180 (GSMP…TYVT), and 206–226 (IFAV…VIVF).

This sequence belongs to the CbiM family. In terms of assembly, forms an energy-coupling factor (ECF) transporter complex composed of an ATP-binding protein (A component, CbiO), a transmembrane protein (T component, CbiQ) and 2 possible substrate-capture proteins (S components, CbiM and CbiN) of unknown stoichimetry.

The protein resides in the cell membrane. Its pathway is cofactor biosynthesis; adenosylcobalamin biosynthesis. Functionally, part of the energy-coupling factor (ECF) transporter complex CbiMNOQ involved in cobalt import. In Moorella thermoacetica (strain ATCC 39073 / JCM 9320), this protein is Cobalt transport protein CbiM.